An 87-amino-acid chain; its full sequence is Small ribosomal subunit protein bS20 (87 aa).

Residues 1-22 (MANIKSQIKRIGTNKKAQERNK) are disordered.

It belongs to the bacterial ribosomal protein bS20 family.

Its function is as follows. Binds directly to 16S ribosomal RNA. The polypeptide is Small ribosomal subunit protein bS20 (Clavibacter sepedonicus (Clavibacter michiganensis subsp. sepedonicus)).